A 226-amino-acid chain; its full sequence is Uracil-DNA glycosylase (226 aa).

Catalysis depends on D64, which acts as the Proton acceptor.

Belongs to the uracil-DNA glycosylase (UDG) superfamily. UNG family.

Its subcellular location is the cytoplasm. It catalyses the reaction Hydrolyzes single-stranded DNA or mismatched double-stranded DNA and polynucleotides, releasing free uracil.. Excises uracil residues from the DNA which can arise as a result of misincorporation of dUMP residues by DNA polymerase or due to deamination of cytosine. The protein is Uracil-DNA glycosylase of Fusobacterium nucleatum subsp. nucleatum (strain ATCC 25586 / DSM 15643 / BCRC 10681 / CIP 101130 / JCM 8532 / KCTC 2640 / LMG 13131 / VPI 4355).